The chain runs to 186 residues: Peptidyl-tRNA hydrolase (186 aa).

Residue Tyr14 coordinates tRNA. His19 (proton acceptor) is an active-site residue. TRNA contacts are provided by Tyr64, Asn66, and Asn112.

Belongs to the PTH family. In terms of assembly, monomer.

Its subcellular location is the cytoplasm. It catalyses the reaction an N-acyl-L-alpha-aminoacyl-tRNA + H2O = an N-acyl-L-amino acid + a tRNA + H(+). Its function is as follows. Hydrolyzes ribosome-free peptidyl-tRNAs (with 1 or more amino acids incorporated), which drop off the ribosome during protein synthesis, or as a result of ribosome stalling. In terms of biological role, catalyzes the release of premature peptidyl moieties from peptidyl-tRNA molecules trapped in stalled 50S ribosomal subunits, and thus maintains levels of free tRNAs and 50S ribosomes. In Geobacillus kaustophilus (strain HTA426), this protein is Peptidyl-tRNA hydrolase.